A 555-amino-acid polypeptide reads, in one-letter code: Serine/threonine-protein kinase Nek4 (555 aa).

In terms of domain architecture, Protein kinase spans 4–258; that stretch reads YEVLEQIGKG…ANELLNHPHL (255 aa). Residues 10 to 18 and K33 each bind ATP; that span reads IGKGSFGSA. D129 serves as the catalytic Proton acceptor. Disordered regions lie at residues 288–328, 346–372, and 443–477; these read LKER…MFNG, QRQE…KAST, and NRET…ITKD. Over residues 304–320 the composition is skewed to polar residues; sequence PSVSDTEAGSVSSSGKA.

Belongs to the protein kinase superfamily. NEK Ser/Thr protein kinase family. NIMA subfamily.

The enzyme catalyses L-seryl-[protein] + ATP = O-phospho-L-seryl-[protein] + ADP + H(+). It catalyses the reaction L-threonyl-[protein] + ATP = O-phospho-L-threonyl-[protein] + ADP + H(+). May be involved in plant development processes. The sequence is that of Serine/threonine-protein kinase Nek4 (NEK4) from Arabidopsis thaliana (Mouse-ear cress).